We begin with the raw amino-acid sequence, 101 residues long: Co-chaperonin GroES 1 (101 aa).

This sequence belongs to the GroES chaperonin family. In terms of assembly, heptamer of 7 subunits arranged in a ring. Interacts with the chaperonin GroEL.

The protein resides in the cytoplasm. Its function is as follows. Together with the chaperonin GroEL, plays an essential role in assisting protein folding. The GroEL-GroES system forms a nano-cage that allows encapsulation of the non-native substrate proteins and provides a physical environment optimized to promote and accelerate protein folding. GroES binds to the apical surface of the GroEL ring, thereby capping the opening of the GroEL channel. This chain is Co-chaperonin GroES 1, found in Rhodopirellula baltica (strain DSM 10527 / NCIMB 13988 / SH1).